A 322-amino-acid chain; its full sequence is Solute carrier family 35 member B1 (322 aa).

A run of 8 helical transmembrane segments spans residues 12–32 (LRLP…GILQ), 51–71 (FALT…KILI), 85–105 (WLYA…NSAL), 136–156 (YPLA…LFMY), 168–188 (TVGF…LTGV), 210–230 (LWST…WEFL), 243–263 (ILLF…TVVY), and 285–305 (VILF…LVFL). The short motif at 318–322 (KKTSH) is the Di-lysine motif element.

This sequence belongs to the nucleotide-sugar transporter family. SLC35B subfamily.

It is found in the endoplasmic reticulum membrane. The catalysed reaction is ADP(in) + ATP(out) = ADP(out) + ATP(in). It carries out the reaction UDP(out) + ATP(in) = UDP(in) + ATP(out). The enzyme catalyses UTP(out) + ATP(in) = UTP(in) + ATP(out). It catalyses the reaction dATP(out) + ATP(in) = dATP(in) + ATP(out). In terms of biological role, ATP:ADP antiporter that catalyzes the exchange of ATP and ADP across the endoplasmic reticulum (ER) membrane. Imports ATP from the cytosol to the ER lumen and exports ADP in the opposite direction. Regulates ER energy metabolism and protein biogenesis. Appears to be part of a calcium-dependent ER to cytosol low energy response axis, where calcium efflux from ER to the cytosol triggers ATP import into the ER lumen to maintain sufficient ATP supply. Provides ATP to ER chaperone HSPA5 that drives protein folding and trafficking in the ER. Can transport dATP, UTP or UDP in exchange for ATP, but the physiological relevance of this process remains to be established. The sequence is that of Solute carrier family 35 member B1 (Slc35b1) from Rattus norvegicus (Rat).